A 180-amino-acid polypeptide reads, in one-letter code: UPF0227 protein YpsIP31758_1593 (180 aa).

Belongs to the UPF0227 family.

The sequence is that of UPF0227 protein YpsIP31758_1593 from Yersinia pseudotuberculosis serotype O:1b (strain IP 31758).